Consider the following 504-residue polypeptide: Maturase K (504 aa).

Belongs to the intron maturase 2 family. MatK subfamily.

The protein resides in the plastid. It is found in the chloroplast. In terms of biological role, usually encoded in the trnK tRNA gene intron. Probably assists in splicing its own and other chloroplast group II introns. The polypeptide is Maturase K (Mentzelia laevicaulis (Blazing star)).